Here is a 297-residue protein sequence, read N- to C-terminus: Putative phosphate permease MJ0630 (297 aa).

The next 9 helical transmembrane spans lie at 2–22 (ITIE…LFIL), 45–65 (LLIL…NVGS), 67–87 (VNSL…VMTL), 99–119 (TVII…YVFG), 121–141 (ILLS…ILYS), 154–174 (ITMI…NLGS), 180–200 (VLGT…FLCL), 225–245 (FIAQ…GMPV), and 274–294 (NIIF…FIIN).

It belongs to the inorganic phosphate transporter (PiT) (TC 2.A.20) family.

The protein resides in the cell membrane. Functionally, potential transporter for phosphate. The protein is Putative phosphate permease MJ0630 of Methanocaldococcus jannaschii (strain ATCC 43067 / DSM 2661 / JAL-1 / JCM 10045 / NBRC 100440) (Methanococcus jannaschii).